Reading from the N-terminus, the 132-residue chain is Small ribosomal subunit protein uS11 (132 aa).

It belongs to the universal ribosomal protein uS11 family. Part of the 30S ribosomal subunit. Interacts with proteins S7 and S18. Binds to IF-3.

In terms of biological role, located on the platform of the 30S subunit, it bridges several disparate RNA helices of the 16S rRNA. Forms part of the Shine-Dalgarno cleft in the 70S ribosome. In Chlamydia trachomatis serovar L2 (strain ATCC VR-902B / DSM 19102 / 434/Bu), this protein is Small ribosomal subunit protein uS11.